A 1435-amino-acid polypeptide reads, in one-letter code: Neuropathy target esterase sws (1435 aa).

Topologically, residues 1-35 (MDVLELLRVSGSNMYYSTFLADAWCYYISNQITMT) are lumenal. The chain crosses the membrane as a helical span at residues 36–56 (MYLYCALGVLSMLFIGWFVYF). Topologically, residues 57 to 1435 (KRLARLRLRH…NTNNETKNYL (1379 aa)) are cytoplasmic. An a nucleoside 3',5'-cyclic phosphate-binding site is contributed by 176–303 (IFGHFEKPIF…IRVIQVIMIR (128 aa)). A compositionally biased stretch (low complexity) spans 361–372 (AASGTAGSTHTA). Disordered regions lie at residues 361 to 405 (AASG…ELSG) and 422 to 452 (NSYP…QPEV). Polar residues predominate over residues 435-449 (GNLSTRRGSITQQEQ). Ser-443 carries the phosphoserine modification. A nucleoside 3',5'-cyclic phosphate-binding positions include 474–601 (ELGL…VVRR) and 590–717 (IVLD…LSHR). The PNPLA domain maps to 944 to 1110 (LVLGGGGARG…VNNLPGHLWR (167 aa)). A GXGXXG motif is present at residues 948-953 (GGGARG). Positions 975–979 (GVSIG) match the GXSXG motif. Catalysis depends on Ser-977, which acts as the Nucleophile. Asp-1097 acts as the Proton acceptor in catalysis. The short motif at 1097-1099 (DGG) is the DGA/G element. The tract at residues 1308–1435 (MDKATQSTPP…NTNNETKNYL (128 aa)) is disordered. The span at 1311–1322 (ATQSTPPLQSKA) shows a compositional bias: polar residues. Composition is skewed to basic and acidic residues over residues 1330 to 1361 (SKEE…RELS) and 1393 to 1424 (MDKK…KENR). A compositionally biased stretch (polar residues) spans 1425–1435 (SNTNNETKNYL).

This sequence belongs to the NTE family. Interacts with Pka-C3; interaction inhibits the catalytic function of Pka-C3 and the esterase activity of sws.

It is found in the endoplasmic reticulum membrane. It carries out the reaction a 1-acyl-sn-glycero-3-phosphocholine + H2O = sn-glycerol 3-phosphocholine + a fatty acid + H(+). Phospholipase B that deacylates intracellular phosphatidylcholine (PtdCho), generating glycerophosphocholine (GroPtdCho). This deacylation occurs at both sn-2 and sn-1 positions of PtdCho. Its specific chemical modification by certain organophosphorus (OP) compounds leads to distal axonopathy. Plays a role in the signaling mechanism between neurons and glia that regulates glia wrapping during development of the adult brain. Essential for membrane lipid homeostasis and cell survival in both neurons and glia of the adult brain. The polypeptide is Neuropathy target esterase sws (Drosophila persimilis (Fruit fly)).